The sequence spans 60 residues: UPF0434 protein YcaR (60 aa).

This sequence belongs to the UPF0434 family.

The sequence is that of UPF0434 protein YcaR from Escherichia coli O139:H28 (strain E24377A / ETEC).